The sequence spans 290 residues: MKRTPHLLAIQSHVVFGHAGNSAAVFPMQRVGVNVWPLNTVQFSNHTQYGQWAGEVLAPQQIPELVEGIAAIGELGNCDAVLSGYLGSAAQGRAILSGVARIKAVNPKALYLCDPVMGHPEKGCSVPAEVSDFLLDEAVAMADFLCPNQLELDSFCGRKPQSLFDCLGMARSLLDKGPRAVLVKHLDYPGKLVDGFEMLLVTADGSWHLRRPLLAFPRQPVGVGDLTSGLFLARVLLGDSLVAAFEFTAAAVHEVLLETQACASYELELVRAQDRIAHPRVRFEATPIGF.

Residues Ser-12 and 47 to 48 (TQ) each bind substrate. Residues Asp-114, Glu-151, Lys-184, and 211–214 (RPLL) contribute to the ATP site. Asp-225 is a substrate binding site.

It belongs to the pyridoxine kinase family. PdxY subfamily. As to quaternary structure, homodimer. Requires Mg(2+) as cofactor.

It catalyses the reaction pyridoxal + ATP = pyridoxal 5'-phosphate + ADP + H(+). Its pathway is cofactor metabolism; pyridoxal 5'-phosphate salvage; pyridoxal 5'-phosphate from pyridoxal: step 1/1. Functionally, pyridoxal kinase involved in the salvage pathway of pyridoxal 5'-phosphate (PLP). Catalyzes the phosphorylation of pyridoxal to PLP. In Pseudomonas fluorescens (strain ATCC BAA-477 / NRRL B-23932 / Pf-5), this protein is Pyridoxal kinase PdxY.